A 427-amino-acid polypeptide reads, in one-letter code: Protein king tubby 1 (427 aa).

Residues 48–174 (SPSNPDQIIS…ASGHNDAEGD (127 aa)) are disordered. The segment covering 57–86 (SSSGSPTTVTATGTGTTTTTGSVTTTPTSP) has biased composition (low complexity).

It belongs to the TUB family.

It localises to the cytoplasm. The protein localises to the nucleus. This is Protein king tubby 1 (king-tubby1) from Culex quinquefasciatus (Southern house mosquito).